A 132-amino-acid chain; its full sequence is Histone H2B.9 (132 aa).

Residues 1–11 (MAPKAEKKPAE) show a composition bias toward basic and acidic residues. The tract at residues 1–41 (MAPKAEKKPAEKAPAPKAEKKIAKEGGTSEIVKKKKKTKKS) is disordered. Residue Ala2 is modified to N,N,N-trimethylalanine; alternate. N,N-dimethylalanine; alternate is present on Ala2. N-methylalanine; alternate is present on Ala2. Lys4 is modified (N6-methyllysine). Lys7, Lys12, Lys20, and Lys21 each carry N6-acetyllysine. Lys128 participates in a covalent cross-link: Glycyl lysine isopeptide (Lys-Gly) (interchain with G-Cter in ubiquitin).

Belongs to the histone H2B family. As to quaternary structure, the nucleosome is a histone octamer containing two molecules each of H2A, H2B, H3 and H4 assembled in one H3-H4 heterotetramer and two H2A-H2B heterodimers. The octamer wraps approximately 147 bp of DNA. In terms of processing, can be acetylated to form H2BK6ac, H2BK33ac and H2BK34ac. Post-translationally, monoubiquitinated by BRE1 to form H2BK143ub1 and deubiquitinated by UBP26. Required for heterochromatic histone H3 di- and trimethylation at H3K4me. May give a specific tag for epigenetic transcriptional activation.

It localises to the nucleus. The protein localises to the chromosome. Core component of nucleosome. Nucleosomes wrap and compact DNA into chromatin, limiting DNA accessibility to the cellular machineries which require DNA as a template. Histones thereby play a central role in transcription regulation, DNA repair, DNA replication and chromosomal stability. DNA accessibility is regulated via a complex set of post-translational modifications of histones, also called histone code, and nucleosome remodeling. The chain is Histone H2B.9 from Arabidopsis thaliana (Mouse-ear cress).